The primary structure comprises 445 residues: Gasdermin-A (445 aa).

The interval 1–251 (MTMFENVTRA…VILIQASDVG (251 aa)) is triggers pyroptosis. 9-13 (RALAR) is a binding site for a cardiolipin. A run of 4 beta stranded transmembrane segments spans residues 78–95 (NFGFKNMLDTRVEGDVDV), 99–120 (VKVKGTAGLSQNSTLEVQTLSV), 163–179 (VTLERAGKAEACFSLPF), and 183–197 (LGLQGSINHKEAVTI).

It belongs to the gasdermin family. Homooligomer; homooligomeric ring-shaped pore complex containing 18-36 subunits when inserted in the membrane. In terms of processing, cleavage by S.pyogenes SpeB relieves autoinhibition by releasing the N-terminal moiety (Gasdermin-A, N-terminal) that initiates pyroptosis. Palmitoylated. As to expression, expressed predominantly in the gastrointestinal tract and, at a lower level, in the skin. Also detected in mammary gland. In the gastrointestinal tract, mainly expressed in differentiated cells, including the differentiated cell layer of esophagus and mucus-secreting pit cells of the gastric epithelium. Down-regulated in gastric cancer cells.

It is found in the cytoplasm. Its subcellular location is the perinuclear region. The protein resides in the cytosol. The protein localises to the cell membrane. Its activity is regulated as follows. The full-length protein before cleavage is inactive: intramolecular interactions between N- and C-terminal domains mediate autoinhibition in the absence of activation signal. The intrinsic pyroptosis-inducing activity is carried by the released N-terminal moiety (Gasdermin-A, N-terminal) following cleavage by S.pyogenes effector protein SpeB. This form constitutes the precursor of the pore-forming protein and acts as a sensor of infection: upon infection by S.pyogenes, specifically cleaved by S.pyogenes effector protein SpeB in epithelial cells, releasing the N-terminal moiety (Gasdermin-A, N-terminal) that binds to membranes and forms pores, triggering pyroptosis. In terms of biological role, pore-forming protein that causes membrane permeabilization and pyroptosis. Released upon cleavage by S.pyogenes effector protein SpeB, and binds to membrane inner leaflet lipids. Homooligomerizes within the membrane and forms pores of 10-15 nanometers (nm) of inner diameter, triggering pyroptosis. Pyroptosis triggers the elimination of the infected skin cell, depriving the pathogen of its protective niche, while inducing an inflammatory response. This ultimately prevents bacterial penetration of the epithelial barrier and a subsequent systemic dissemination of the pathogen. Binds to cardiolipin and other acidic phospholipids, such as phosphatidylserine, which mediate its targeting to the inner leaflet membrane. The sequence is that of Gasdermin-A from Homo sapiens (Human).